A 522-amino-acid polypeptide reads, in one-letter code: Zinc finger and BTB domain-containing protein 18 (522 aa).

One can recognise a BTB domain in the interval 24-91 (CDCTVLVGDA…MYEGKLQFKD (68 aa)). The segment covering 121-143 (ATTEADSTKKEEDASSCSDKVES) has biased composition (basic and acidic residues). Positions 121–166 (ATTEADSTKKEEDASSCSDKVESLSDGSSHMAGDLPSDEDEGEDDK) are disordered. Position 157 is a phosphoserine (Ser157). Lys273 participates in a covalent cross-link: Glycyl lysine isopeptide (Lys-Gly) (interchain with G-Cter in SUMO2). The tract at residues 310–427 (EPAHLAPLRE…TFSCMYTLKR (118 aa)) is interaction with DNMT3A. 4 consecutive C2H2-type zinc fingers follow at residues 370–392 (FMCPLCNKVFPSPHILQIHLSTH), 410–432 (PTCSLCGKTFSCMYTLKRHERTH), 438–460 (YTCTQCGKSFQYSHNLSRHAVVH), and 466–489 (HACKWCERRFTQSGDLYRHIRKFH). 2 positions are modified to phosphoserine: Ser516 and Ser517.

It belongs to the krueppel C2H2-type zinc-finger protein family. ZBTB18 subfamily. In terms of assembly, interacts with DNMT3A.

The protein resides in the nucleus. Functionally, transcriptional repressor that plays a role in various developmental processes such as myogenesis and brain development. Specifically binds the consensus DNA sequence 5'-[AC]ACATCTG[GT][AC]-3' which contains the E box core, and acts by recruiting chromatin remodeling multiprotein complexes. Plays a key role in myogenesis by directly repressing the expression of ID2 and ID3, 2 inhibitors of skeletal myogenesis. Also involved in controlling cell division of progenitor cells and regulating the survival of postmitotic cortical neurons. May also play a role in the organization of chromosomes in the nucleus. The chain is Zinc finger and BTB domain-containing protein 18 (Zbtb18) from Rattus norvegicus (Rat).